A 160-amino-acid chain; its full sequence is SsrA-binding protein (160 aa).

Belongs to the SmpB family.

Its subcellular location is the cytoplasm. In terms of biological role, required for rescue of stalled ribosomes mediated by trans-translation. Binds to transfer-messenger RNA (tmRNA), required for stable association of tmRNA with ribosomes. tmRNA and SmpB together mimic tRNA shape, replacing the anticodon stem-loop with SmpB. tmRNA is encoded by the ssrA gene; the 2 termini fold to resemble tRNA(Ala) and it encodes a 'tag peptide', a short internal open reading frame. During trans-translation Ala-aminoacylated tmRNA acts like a tRNA, entering the A-site of stalled ribosomes, displacing the stalled mRNA. The ribosome then switches to translate the ORF on the tmRNA; the nascent peptide is terminated with the 'tag peptide' encoded by the tmRNA and targeted for degradation. The ribosome is freed to recommence translation, which seems to be the essential function of trans-translation. This chain is SsrA-binding protein, found in Photorhabdus laumondii subsp. laumondii (strain DSM 15139 / CIP 105565 / TT01) (Photorhabdus luminescens subsp. laumondii).